A 436-amino-acid chain; its full sequence is MAKPVVAIVGRPNVGKSTIFNRIVGERVSIVEDVPGVTRDRIYNSAEWLGKEFNIIDTGGIDLSDEPFLEQIRAQAEIAIDEADVIIFITNGREGVTDADEQVAKILYRSNKPIVLAINKVDNPEMRDQIYDFYSLGFGEPYPISGSHGLGLGDMLDAVRAHFPKEEEEEYPDETVKFSLIGRPNVGKSSILNALLGEDRVIVSDIAGTTRDAIDTTYTFDGQDYVMIDTAGMRKRGKVYESTEKYSVLRAMRAIERSDVVLVVINAEEGIREQDKRIAGYAHDAGRAIIIVVNKWDAINKDEKTINVWTEDIREQFQFLSYAPIVFVSAKTKQRLNNLFPLINQVSDNHSLRVQSSMLNDVISDAVAMNPSPMDKGKRLKIFYTTQVAVKPPTFVVFVNDPELMHFSYERFLENRIREAFPFDGTPIRVIARKRK.

2 consecutive EngA-type G domains span residues 4 to 167 (PVVA…PKEE) and 176 to 351 (VKFS…DNHS). GTP-binding positions include 10 to 17 (GRPNVGKS), 57 to 61 (DTGGI), 119 to 122 (NKVD), 182 to 189 (GRPNVGKS), 229 to 233 (DTAGM), and 294 to 297 (NKWD). The KH-like domain maps to 352 to 436 (LRVQSSMLND…PIRVIARKRK (85 aa)).

Belongs to the TRAFAC class TrmE-Era-EngA-EngB-Septin-like GTPase superfamily. EngA (Der) GTPase family. Associates with the 50S ribosomal subunit.

GTPase that plays an essential role in the late steps of ribosome biogenesis. This is GTPase Der from Listeria innocua serovar 6a (strain ATCC BAA-680 / CLIP 11262).